A 37-amino-acid chain; its full sequence is Kappa-actitoxin-Bcs3b (37 aa).

The 36-residue stretch at 2-37 (CKDGFPTATCQHAKLVGNCKNSQKYRANCAKTCGPC) folds into the ShKT domain. Cystine bridges form between C2–C37, C11–C30, and C20–C34. The interval 25 to 26 (KY) is crucial for binding to potassium channels.

The protein belongs to the sea anemone type 1 potassium channel toxin family. Type 1b subfamily.

It is found in the secreted. It localises to the nematocyst. Functionally, inhibits voltage-gated potassium channels (IC(50)=14.42 nM for rKCNA1/Kv1.1, IC(50)=80.4 nM for rKCNA2/Kv1.2, IC(50)=7.76 nM for rKCNA6/Kv1.6, IC(50)=13.12 nM for hKCNA3/Kv1.3, and IC(50)=49.14 nM for insect Shaker IR). Binds the Shaker IR channels in a voltage-independent manner. The sequence is that of Kappa-actitoxin-Bcs3b from Bunodosoma caissarum (Sea anemone).